The sequence spans 512 residues: Endoglucanase 14 (512 aa).

Residues 1–22 form the signal peptide; sequence MLAAAIELVVIATSCMVRDAHG. N-linked (GlcNAc...) asparagine glycosylation is present at N76. D103 serves as the catalytic Nucleophile. 2 N-linked (GlcNAc...) asparagine glycosylation sites follow: N192 and N215. Residues H433, D484, and E493 contribute to the active site.

This sequence belongs to the glycosyl hydrolase 9 (cellulase E) family.

The protein localises to the secreted. The enzyme catalyses Endohydrolysis of (1-&gt;4)-beta-D-glucosidic linkages in cellulose, lichenin and cereal beta-D-glucans.. In Oryza sativa subsp. japonica (Rice), this protein is Endoglucanase 14.